We begin with the raw amino-acid sequence, 212 residues long: Riboflavin kinase (212 aa).

The tract at residues 1-83 (MTELYCERKT…NLLRYFDIAS (83 aa)) is unknown. The interval 84-212 (IKLVGRVVTG…GDRVELEVYL (129 aa)) is riboflavin kinase. 93 to 98 (GLGEGA) lines the CDP pocket. 2 residues coordinate Mg(2+): Thr122 and Asn124. FMN-binding residues include Thr179 and Glu187. Position 192–195 (192–195 (VRVR)) interacts with CDP.

The protein belongs to the archaeal riboflavin kinase family. It depends on Mg(2+) as a cofactor.

The enzyme catalyses riboflavin + CTP = CDP + FMN + H(+). Its pathway is cofactor biosynthesis; FMN biosynthesis; FMN from riboflavin (CTP route): step 1/1. Functionally, catalyzes the CTP-dependent phosphorylation of riboflavin (vitamin B2) to form flavin mononucleotide (FMN). This is Riboflavin kinase (ribK) from Pyrobaculum calidifontis (strain DSM 21063 / JCM 11548 / VA1).